Reading from the N-terminus, the 521-residue chain is Feruloyl esterase B (521 aa).

The N-terminal stretch at 1–17 (MKVASLLSLALPGAALA) is a signal peptide. Intrachain disulfides connect Cys-26/Cys-72 and Cys-61/Cys-111. N-linked (GlcNAc...) asparagine glycans are attached at residues Asn-37, Asn-51, Asn-77, Asn-95, Asn-144, and Asn-177. Cystine bridges form between Cys-184–Cys-438, Cys-253–Cys-270, and Cys-279–Cys-288. The Acyl-ester intermediate role is filled by Ser-185. 5 residues coordinate Ca(2+): Asp-254, Asp-257, Ala-259, Asp-261, and Ile-263. N-linked (GlcNAc...) asparagine glycans are attached at residues Asn-284, Asn-347, Asn-352, and Asn-378. Residues Asp-397 and His-437 each act as charge relay system in the active site. N-linked (GlcNAc...) asparagine glycosylation is found at Asn-488 and Asn-511. An intrachain disulfide couples Cys-498 to Cys-520.

This sequence belongs to the tannase family. Homodimer. Glycosylated.

It localises to the secreted. It catalyses the reaction feruloyl-polysaccharide + H2O = ferulate + polysaccharide.. Inhibited by the specific serine esterase inhibitor AEBSF. Its function is as follows. Involved in degradation of plant cell walls. Hydrolyzes of the feruloyl-arabinose ester bond in arabinoxylans as well as the feruloyl-galactose and feruloyl-arabinose ester bonds in pectin. This is Feruloyl esterase B (faeB) from Aspergillus niger.